A 531-amino-acid chain; its full sequence is SWI/SNF-related matrix-associated actin-dependent regulator of chromatin subfamily D member 2 (531 aa).

A disordered region spans residues 20 to 85 (AVAAALGAPP…MSPGSRMPMA (66 aa)). Positions 34 to 45 (PGMLPSPALRGP) are enriched in low complexity. Arginine 81 and arginine 104 each carry asymmetric dimethylarginine. Residue serine 203 is modified to Phosphoserine. Residues 205-226 (SKADGDNAGTAGTPGGTPAADK) are disordered. The segment covering 210 to 225 (DNAGTAGTPGGTPAAD) has biased composition (low complexity). Threonine 217 carries the post-translational modification Phosphothreonine. A Glycyl lysine isopeptide (Lys-Gly) (interchain with G-Cter in SUMO2) cross-link involves residue lysine 226. The SWIB/MDM2 domain maps to 306–383 (HQPPQYKLDP…PMKLAGLLQH (78 aa)).

Belongs to the SMARCD family. In terms of assembly, component of the multiprotein chromatin-remodeling complexes SWI/SNF: SWI/SNF-A (BAF), SWI/SNF-B (PBAF) and related complexes. The canonical complex contains a catalytic subunit (either SMARCA4/BRG1/BAF190A or SMARCA2/BRM/BAF190B), and at least SMARCE1, ACTL6A/BAF53, SMARCC1/BAF155, SMARCC2/BAF170, and SMARCB1/SNF5/BAF47. Other subunits specific to each of the complexes may also be present permitting several possible combinations developmentally and tissue specific. Component of the BAF complex, which includes at least actin (ACTB), ARID1A/BAF250A, ARID1B/BAF250B, SMARCA2/BRM, SMARCA4/BRG1, ACTL6A/BAF53, ACTL6B/BAF53B, SMARCE1/BAF57, SMARCC1/BAF155, SMARCC2/BAF170, SMARCB1/SNF5/INI1, and one or more SMARCD1/BAF60A, SMARCD2/BAF60B, or SMARCD3/BAF60C. In muscle cells, the BAF complex also contains DPF3. Component of the SWI/SNF-B (PBAF) chromatin remodeling complex, at least composed of SMARCA4/BRG1, SMARCB1/BAF47/SNF5, ACTL6A/BAF53A or ACTL6B/BAF53B, SMARCE1/BAF57, SMARCD1/BAF60A, SMARCD2/BAF60B, perhaps SMARCD3/BAF60C, SMARCC1/BAF155, SMARCC2/BAF170, PBRM1/BAF180, ARID2/BAF200 and actin (ACTB). Interacts with UNKL. Interacts with CEBPE. In terms of processing, ubiquitinated through a signaling process involving RAC1 and the RING finger protein UNKL.

The protein resides in the nucleus. Involved in transcriptional activation and repression of select genes by chromatin remodeling (alteration of DNA-nucleosome topology). Component of SWI/SNF chromatin remodeling complexes that carry out key enzymatic activities, changing chromatin structure by altering DNA-histone contacts within a nucleosome in an ATP-dependent manner. Critical regulator of myeloid differentiation, controlling granulocytopoiesis and the expression of genes involved in neutrophil granule formation. The chain is SWI/SNF-related matrix-associated actin-dependent regulator of chromatin subfamily D member 2 (Smarcd2) from Mus musculus (Mouse).